Reading from the N-terminus, the 565-residue chain is NAD-dependent malic enzyme (565 aa).

Y104 functions as the Proton donor in the catalytic mechanism. Residue R157 participates in NAD(+) binding. The active-site Proton acceptor is the K175. E246, D247, and D270 together coordinate a divalent metal cation. NAD(+) is bound by residues D270 and N418.

The protein belongs to the malic enzymes family. In terms of assembly, homotetramer. The cofactor is Mg(2+). Requires Mn(2+) as cofactor.

It carries out the reaction (S)-malate + NAD(+) = pyruvate + CO2 + NADH. The catalysed reaction is oxaloacetate + H(+) = pyruvate + CO2. This is NAD-dependent malic enzyme from Escherichia coli O9:H4 (strain HS).